The sequence spans 233 residues: Lipoprotein-releasing system ATP-binding protein LolD (233 aa).

The region spanning 6-233 (LQCDNLCKRY…TAELSLMGAE (228 aa)) is the ABC transporter domain. Position 42 to 49 (42 to 49 (GSSGSGKS)) interacts with ATP.

It belongs to the ABC transporter superfamily. Lipoprotein translocase (TC 3.A.1.125) family. The complex is composed of two ATP-binding proteins (LolD) and two transmembrane proteins (LolC and LolE).

Its subcellular location is the cell inner membrane. Part of the ABC transporter complex LolCDE involved in the translocation of mature outer membrane-directed lipoproteins, from the inner membrane to the periplasmic chaperone, LolA. Responsible for the formation of the LolA-lipoprotein complex in an ATP-dependent manner. This chain is Lipoprotein-releasing system ATP-binding protein LolD, found in Salmonella paratyphi A (strain ATCC 9150 / SARB42).